The following is a 229-amino-acid chain: 2-phytyl-1,4-naphtoquinone methyltransferase (229 aa).

Belongs to the class I-like SAM-binding methyltransferase superfamily. MenG/UbiE family.

It catalyses the reaction demethylphylloquinol + S-adenosyl-L-methionine = phylloquinol + S-adenosyl-L-homocysteine + H(+). It participates in cofactor biosynthesis; phylloquinone biosynthesis. Its function is as follows. Methyltransferase required for the conversion of 2-phytyl-1,4-beta-naphthoquinol to phylloquinol. This chain is 2-phytyl-1,4-naphtoquinone methyltransferase, found in Nostoc sp. (strain PCC 7120 / SAG 25.82 / UTEX 2576).